Reading from the N-terminus, the 1141-residue chain is MAVRGEAAQDLAKPGLGGASPARVARGNHRHRGESSPSPRGSGCCWRALALQPLRRSPQLSSALCAGSLSVLLALLVRLVGGEVGGELEKSQEAAAEEEEEEGARGGVFPGPRGGAPGGGAQLSPWLQPAALLFSLLCAFFWMGLCLLRAGVRLPLAVALLAACCAGEALVQLSLGVGDGRLLSLPAAGVLLSCLGGATWLVLRLRLGVLMVAWTSVLRTVALVSLERFKVAWRPYLAYLAAVLGLLLARYAEQILPQCSGPAPPRERFGSQLSARTKEEIPGWKRRRRSSSVVAGEMSGCSGKSHRRTSLPCIPREQLMGHSEWDHKRGPRGSQSGTSITVDIAVMGEAHGLITDLLADPSLPPNVCTSLRAVSNLLSTQLTFQAIHKPRVNPTVTFSENYTCSDSEEGLEKDKQAISKRLRRSLPPGLLRRVSSTWTTTTSATGLPTLEPAPVRRDRSASIKPHEAPSPSAVNPDSWNAPGLTTLTKSRSFTSSYAVSAANHVKAKKQNRPGGLAKISPVPSPSSSPPQGSPASSPVSNSASQQFPESPEVTIKRGPGSHRALTYTQSAPDLSPQIPPPSVICSSCGRPYSQGNPADGPSERSGPAMLKPNRTDDTSQVTSDYETNNNSDSSDILQNEEEAECQREPQRKASACGTYTSQTMIFLDKPILAPEPLVMDNLDSIMDQLNTWNFPIFDLMENIGRKCGRILSQVSYRLFEDMGLFEAFKIPVREFMNYFHALEIGYRDIPYHNRIHATDVLHAVWYLTTQPIPGLPSVIGDHGSASDSDSDSGFTHGHMGYVFSKMYHVPDDKYGCLSGNIPALELMALYVAAAMHDYDHPGRTNAFLVATSAPQAVLYNDRSVLENHHAAAAWNLFMSRPEYNFLVNLDHVEFKHFRFLVIEAILATDLKKHFDFVAKFNAKVNDDVGIDWTNENDRLLVCQMCIKLADINGPAKCKELHLRWTEGIASEFYEQGDEEASLGLPISPFMDRSAPQLANLQESFISHIVGPLCHSYDSAGLMPGKWVDDSDDSGDTDDPEEEEEEAETPHEDEACESSIAPRKKSFKRRRIYCQITQHLLQNHMMWKKVIEEEQCLSGTENQSLDQVPLQHPSEQIQAIKEEEEEKGKPRAEETLAPQPDL.

Residues 1–42 (MAVRGEAAQDLAKPGLGGASPARVARGNHRHRGESSPSPRGS) form a disordered region. The chain crosses the membrane as a helical span at residues 62 to 82 (SALCAGSLSVLLALLVRLVGG). Positions 90–111 (KSQEAAAEEEEEEGARGGVFPG) are disordered. The next 5 membrane-spanning stretches (helical) occupy residues 127–147 (LQPAALLFSLLCAFFWMGLCL), 157–177 (AVALLAACCAGEALVQLSLGV), 182–202 (LLSLPAAGVLLSCLGGATWLV), 207–227 (LGVLMVAWTSVLRTVALVSLE), and 229–249 (FKVAWRPYLAYLAAVLGLLLA). S310 carries the phosphoserine modification. Residues 433–445 (RVSSTWTTTTSAT) show a composition bias toward low complexity. The disordered stretch occupies residues 433-483 (RVSSTWTTTTSATGLPTLEPAPVRRDRSASIKPHEAPSPSAVNPDSWNAPG). The segment covering 454–467 (PVRRDRSASIKPHE) has biased composition (basic and acidic residues). Polar residues predominate over residues 472 to 483 (SAVNPDSWNAPG). Residues S492, S520, S524, and S533 each carry the phosphoserine modification. The segment at 505–654 (VKAKKQNRPG…CQREPQRKAS (150 aa)) is disordered. Residues 522–532 (VPSPSSSPPQG) show a composition bias toward pro residues. Residues 533–544 (SPASSPVSNSAS) show a composition bias toward low complexity. Polar residues predominate over residues 618–637 (TSQVTSDYETNNNSDSSDIL). An interaction with SLFN12 region spans residues 669–1141 (KPILAPEPLV…EETLAPQPDL (473 aa)). The 420-residue stretch at 674–1093 (PEPLVMDNLD…MMWKKVIEEE (420 aa)) folds into the PDEase domain. The active-site Proton donor is H752. An AMP-binding site is contributed by H752. Residues H756, H836, D837, and D950 each coordinate Mn(2+). The AMP site is built by D837, D950, and Q1001. Mg(2+) is bound at residue D837. 2 disordered regions span residues 1024 to 1060 (GKWVDDSDDSGDTDDPEEEEEEAETPHEDEACESSIA) and 1120 to 1141 (KEEEEEKGKPRAEETLAPQPDL). Positions 1029–1046 (DSDDSGDTDDPEEEEEEA) are enriched in acidic residues. S1033 bears the Phosphoserine mark. The residue at position 1036 (T1036) is a Phosphothreonine. Residue K1120 forms a Glycyl lysine isopeptide (Lys-Gly) (interchain with G-Cter in SUMO2) linkage.

The protein belongs to the cyclic nucleotide phosphodiesterase family. PDE3 subfamily. Requires Mn(2+) as cofactor. The cofactor is Mg(2+).

It is found in the membrane. It localises to the cytoplasm. Its subcellular location is the cytosol. The enzyme catalyses a nucleoside 3',5'-cyclic phosphate + H2O = a nucleoside 5'-phosphate + H(+). The catalysed reaction is 3',5'-cyclic AMP + H2O = AMP + H(+). It catalyses the reaction 3',5'-cyclic GMP + H2O = GMP + H(+). It carries out the reaction 3',5'-cyclic UMP + H2O = UMP + H(+). Its activity is regulated as follows. Inhibited by cGMP. Functionally, cyclic nucleotide phosphodiesterase with specificity for the second messengers cAMP and cGMP, which are key regulators of many important physiological processes. Also has activity toward cUMP. Independently of its catalytic activity it is part of an E2/17beta-estradiol-induced pro-apoptotic signaling pathway. E2 stabilizes the PDE3A/SLFN12 complex in the cytosol, promoting the dephosphorylation of SLFN12 and activating its pro-apoptotic ribosomal RNA/rRNA ribonuclease activity. This apoptotic pathway might be relevant in tissues with high concentration of E2 and be for instance involved in placenta remodeling. This Mus musculus (Mouse) protein is cGMP-inhibited 3',5'-cyclic phosphodiesterase 3A.